The following is a 315-amino-acid chain: MSQPTPAVRTFQDLILALQNYWAEQGCVVLQPYDMEVGAGTFHTATFLRAVGPETWNAAYVQPSRRPADGRYGENPNRLQHYYQFQVVLKPNPANFQELYLGSLKAIGLDPLVHDIRFVEDNWESPTLGAWGLGWEIWLNGMEVTQFTYFQQVGGIECYPVTGEITYGLERLAMYLQGVDSVYDLVWADGPFGKVTYGDVFHQNEVEQSTYNFEHANVEKLFELFDFYESEANRLIKLDLPLPTYEMVLKASHTFNLLDARRAISVTERQRYILRVRTLARDVAQSYLQARARLGFPMASPELRDEVLAKLEAAQ.

Belongs to the class-II aminoacyl-tRNA synthetase family. In terms of assembly, tetramer of two alpha and two beta subunits.

The protein localises to the cytoplasm. The enzyme catalyses tRNA(Gly) + glycine + ATP = glycyl-tRNA(Gly) + AMP + diphosphate. The polypeptide is Glycine--tRNA ligase alpha subunit (Pseudomonas entomophila (strain L48)).